Here is a 360-residue protein sequence, read N- to C-terminus: Peptide chain release factor 1 (360 aa).

Gln235 carries the N5-methylglutamine modification.

Belongs to the prokaryotic/mitochondrial release factor family. In terms of processing, methylated by PrmC. Methylation increases the termination efficiency of RF1.

The protein localises to the cytoplasm. Its function is as follows. Peptide chain release factor 1 directs the termination of translation in response to the peptide chain termination codons UAG and UAA. The sequence is that of Peptide chain release factor 1 from Burkholderia pseudomallei (strain 1106a).